A 276-amino-acid chain; its full sequence is Carbonic anhydrase Nec1 (276 aa).

Positions 1 to 27 (MKMINSIFTHGSLIILLLLFHSISIKA) are cleaved as a signal peptide. In terms of domain architecture, Alpha-carbonic anhydrase spans 34–270 (REFDYLEGSE…LNHREVQLHC (237 aa)). Cysteine 59 and cysteine 220 are disulfide-bonded. Catalysis depends on histidine 98, which acts as the Proton acceptor. Residues histidine 124 and histidine 126 each contribute to the Zn(2+) site. Residue asparagine 134 is glycosylated (N-linked (GlcNAc...) asparagine). Histidine 143 is a binding site for Zn(2+). The segment at 216–217 (TT) is substrate binding.

Belongs to the alpha-class carbonic anhydrase family. As to quaternary structure, homodimer. It depends on Zn(2+) as a cofactor. In terms of tissue distribution, confined to nectaries.

It carries out the reaction hydrogencarbonate + H(+) = CO2 + H2O. It participates in one-carbon metabolism. In terms of biological role, involved in the production of blood-red nectar containing the alkaloid nesocodin and that serves as a visual attractant for pollinator visitation, including vertebrates such as Phelsuma geckos. The nectar is initially acidic and pale yellow, but slowly becomes alkaline before turning into red within 24 hours. Together with NEC2 and NEC3, facilitates the condensation of sinapaldehyde ((E)-3,5-dimethoxy-4-hydroxycinnamaldehyde) and proline to form nesocodin, a pigment with a stable imine bond. Mediates the alkalinization (pH increase) of the flower nectar by catalyzing the reversible hydration of carbon dioxide. The sequence is that of Carbonic anhydrase Nec1 from Nesocodon mauritianus (Blue Mauritius bellflower).